A 591-amino-acid polypeptide reads, in one-letter code: Zinc finger protein 48 (591 aa).

An N-acetylmethionine modification is found at Met1. Disordered stretches follow at residues 1–24 (MEAS…IKEE) and 55–80 (GLGK…GSND). Composition is skewed to basic and acidic residues over residues 8–24 (EFEH…IKEE) and 55–65 (GLGKRQPRDPV). A Phosphoserine modification is found at Ser12. Lys58 is covalently cross-linked (Glycyl lysine isopeptide (Lys-Gly) (interchain with G-Cter in SUMO2)). C2H2-type zinc fingers lie at residues 83–105 (AVCG…QRTH) and 111–133 (YKCG…QRTH). A disordered region spans residues 131-160 (RTHTGEKAYRVRPPAPGPPKMPRSRIPAGE). Lys150 participates in a covalent cross-link: Glycyl lysine isopeptide (Lys-Gly) (interchain with G-Cter in SUMO2). C2H2-type zinc fingers lie at residues 163 to 185 (TICG…QRTH) and 191 to 213 (YKCG…QRTH). A disordered region spans residues 206–241 (RIKHQRTHRGDQLPRPVVPRRQPSPAAPAAPHRPKA). Over residues 224-235 (PRRQPSPAAPAA) the composition is skewed to low complexity. Lys240 is covalently cross-linked (Glycyl lysine isopeptide (Lys-Gly) (interchain with G-Cter in SUMO2)). C2H2-type zinc fingers lie at residues 246–268 (YICT…QRSH) and 274–296 (FGCD…LRVH). A Glycyl lysine isopeptide (Lys-Gly) (interchain with G-Cter in SUMO2) cross-link involves residue Lys300. C2H2-type zinc fingers lie at residues 302 to 324 (YLCP…LRTH) and 330 to 352 (HACP…RLTH). The disordered stretch occupies residues 372–429 (PPPPPLGTSPSLTPRSPSHSSDGPFGLPGLEPEPGGPQAGEPPPPLAGDKPHKCPECG). Low complexity predominate over residues 379-404 (TSPSLTPRSPSHSSDGPFGLPGLEPE). The C2H2-type 9 zinc finger occupies 423–445 (HKCPECGKGFRRSSDLVKHHRVH). Lys449 participates in a covalent cross-link: Glycyl lysine isopeptide (Lys-Gly) (interchain with G-Cter in SUMO2). Residues 451 to 473 (YLCPECGKGFADSSARVKHLRTH) form a C2H2-type 10 zinc finger. A disordered region spans residues 464–512 (SARVKHLRTHQGERTRPPPPPSTLLRPHNPPGSVPIVPQSRVQGRPSGP). Positions 480-496 (PPPPPSTLLRPHNPPGS) are enriched in pro residues. C2H2-type zinc fingers lie at residues 516-538 (HVCG…RRTH) and 544-566 (YKCA…QRGH). The segment at 564–591 (RGHLALKPFGVGDGPPRPLKEESPAGLE) is disordered. The segment covering 581-591 (PLKEESPAGLE) has biased composition (basic and acidic residues). A Glycyl lysine isopeptide (Lys-Gly) (interchain with G-Cter in SUMO2) cross-link involves residue Lys583.

It belongs to the krueppel C2H2-type zinc-finger protein family.

It is found in the nucleus. In terms of biological role, may be involved in transcriptional regulation. The protein is Zinc finger protein 48 (Znf48) of Mus musculus (Mouse).